Consider the following 501-residue polypeptide: Pyruvate dehydrogenase protein X component, mitochondrial (501 aa).

A mitochondrion-targeting transit peptide spans 1–53 (MAASWRLHCNQPLLRYLLGFSSRRSLGLAQGAAAWPVDRGASWRWFHSTQLLQ). Residues 56–132 (PIKVLMPSLS…QLGSLIALMV (77 aa)) form the Lipoyl-binding domain. Residue Lys-97 is modified to N6-lipoyllysine. The segment at 145-176 (KDVSAPPPVSKPPAPTQPSPQPQIPCPARKEH) is disordered. Residues 149-169 (APPPVSKPPAPTQPSPQPQIP) show a composition bias toward pro residues. The Peripheral subunit-binding (PSBD) domain maps to 183-220 (RLSPAARNILEKHSLDASQGTATGPRGIFTKEDALKLV). Lys-194 bears the N6-acetyllysine mark. Ser-196 carries the phosphoserine modification. The tract at residues 228–256 (ITESRPASAPPPSLSASVPPQATAGPSYP) is disordered. Lys-394 carries the N6-succinyllysine modification.

This sequence belongs to the 2-oxoacid dehydrogenase family. As to quaternary structure, part of the inner core of the multimeric pyruvate dehydrogenase complex that is composed of about 48 DLAT and 12 PDHX molecules. This core binds multiple copies of pyruvate dehydrogenase (subunits PDH1A and PDHB, E1), dihydrolipoamide acetyltransferase (DLAT, E2) and lipoamide dehydrogenase (DLD, E3). Interacts with SIRT4. Interacts with DLD. Post-translationally, delipoylated at Lys-97 by SIRT4, delipoylation decreases the PHD complex activity.

The protein resides in the mitochondrion matrix. Functionally, required for anchoring dihydrolipoamide dehydrogenase (E3) to the dihydrolipoamide transacetylase (E2) core of the pyruvate dehydrogenase complexes of eukaryotes. This specific binding is essential for a functional PDH complex. The protein is Pyruvate dehydrogenase protein X component, mitochondrial (Pdhx) of Mus musculus (Mouse).